A 187-amino-acid chain; its full sequence is Putative manganese efflux pump MntP (187 aa).

The next 6 helical transmembrane spans lie at 3–23 (FYSL…VSLC), 35–55 (HYLI…TIGY), 56–76 (FIGI…AFIL), 107–127 (LALA…FAFL), 129–149 (VNLL…CIIA), and 166–186 (LLGG…HLFF).

It belongs to the MntP (TC 9.B.29) family.

It localises to the cell inner membrane. Probably functions as a manganese efflux pump. The protein is Putative manganese efflux pump MntP of Campylobacter jejuni (strain RM1221).